The sequence spans 475 residues: Aspartyl/glutamyl-tRNA(Asn/Gln) amidotransferase subunit B (475 aa).

It belongs to the GatB/GatE family. GatB subfamily. As to quaternary structure, heterotrimer of A, B and C subunits.

The catalysed reaction is L-glutamyl-tRNA(Gln) + L-glutamine + ATP + H2O = L-glutaminyl-tRNA(Gln) + L-glutamate + ADP + phosphate + H(+). The enzyme catalyses L-aspartyl-tRNA(Asn) + L-glutamine + ATP + H2O = L-asparaginyl-tRNA(Asn) + L-glutamate + ADP + phosphate + 2 H(+). Allows the formation of correctly charged Asn-tRNA(Asn) or Gln-tRNA(Gln) through the transamidation of misacylated Asp-tRNA(Asn) or Glu-tRNA(Gln) in organisms which lack either or both of asparaginyl-tRNA or glutaminyl-tRNA synthetases. The reaction takes place in the presence of glutamine and ATP through an activated phospho-Asp-tRNA(Asn) or phospho-Glu-tRNA(Gln). The polypeptide is Aspartyl/glutamyl-tRNA(Asn/Gln) amidotransferase subunit B (Trichlorobacter lovleyi (strain ATCC BAA-1151 / DSM 17278 / SZ) (Geobacter lovleyi)).